Consider the following 428-residue polypeptide: NADP-specific glutamate dehydrogenase (428 aa).

Substrate contacts are provided by lysine 68 and lysine 92. Lysine 104 (proton donor) is an active-site residue. Threonine 188 and asparagine 219 together coordinate NADP(+). Residue serine 356 coordinates substrate.

This sequence belongs to the Glu/Leu/Phe/Val dehydrogenases family. Homohexamer.

The enzyme catalyses L-glutamate + NADP(+) + H2O = 2-oxoglutarate + NH4(+) + NADPH + H(+). Its function is as follows. Catalyzes the reversible oxidative deamination of glutamate to alpha-ketoglutarate and ammonia. The chain is NADP-specific glutamate dehydrogenase (gdhA) from Synechocystis sp. (strain ATCC 27184 / PCC 6803 / Kazusa).